Here is a 329-residue protein sequence, read N- to C-terminus: MQGSVTEFLKPRLVDIEQVSSTHAKVTLEPLERGFGHTLGNALRRILLSSMPGCAVTEVEIDGVLHEYSTKEGVQEDILEILLNLKGLAVRVQGKDEVILTLNKSGIGPVTAADITHDGDVEIVKPQHVICHLTDENASISMRIKVQRGRGYVPASTRIHSEEDERPIGRLLVDACYSPVERIAYNVEAARVEQRTDLDKLVIEMETNGTIDPEEAIRRAATILAEQLEAFVDLRDVRQPEVKEEKPEFDPILLRPVDDLELTVRSANCLKAEAIHYIGDLVQRTEVELLKTPNLGKKSLTEIKDVLASRGLSLGMRLEDWPPASIADE.

Positions 1-235 are alpha N-terminal domain (alpha-NTD); sequence MQGSVTEFLK…EQLEAFVDLR (235 aa). Positions 249-329 are alpha C-terminal domain (alpha-CTD); that stretch reads FDPILLRPVD…DWPPASIADE (81 aa).

It belongs to the RNA polymerase alpha chain family. In terms of assembly, homodimer. The RNAP catalytic core consists of 2 alpha, 1 beta, 1 beta' and 1 omega subunit. When a sigma factor is associated with the core the holoenzyme is formed, which can initiate transcription.

It carries out the reaction RNA(n) + a ribonucleoside 5'-triphosphate = RNA(n+1) + diphosphate. DNA-dependent RNA polymerase catalyzes the transcription of DNA into RNA using the four ribonucleoside triphosphates as substrates. The polypeptide is DNA-directed RNA polymerase subunit alpha (Salmonella choleraesuis (strain SC-B67)).